The following is a 95-amino-acid chain: uncharacterized protein (95 aa).

A coiled-coil region spans residues 60–89; that stretch reads VKNMINRIVEELDKRIDEIKEGLNELEKSG.

This is an uncharacterized protein from Sulfolobus islandicus filamentous virus (isolate Iceland/Hveragerdi) (SIFV).